Reading from the N-terminus, the 259-residue chain is Phosphate import ATP-binding protein PstB (259 aa).

Positions 13-254 (IQVRDLNFYY…PAQRQTEDYI (242 aa)) constitute an ABC transporter domain. 45–52 (GPSGCGKS) contacts ATP.

This sequence belongs to the ABC transporter superfamily. Phosphate importer (TC 3.A.1.7) family. As to quaternary structure, the complex is composed of two ATP-binding proteins (PstB), two transmembrane proteins (PstC and PstA) and a solute-binding protein (PstS).

The protein localises to the cell inner membrane. The enzyme catalyses phosphate(out) + ATP + H2O = ADP + 2 phosphate(in) + H(+). Its function is as follows. Part of the ABC transporter complex PstSACB involved in phosphate import. Responsible for energy coupling to the transport system. This Edwardsiella tarda protein is Phosphate import ATP-binding protein PstB.